A 349-amino-acid chain; its full sequence is Protein-glutamate methylesterase/protein-glutamine glutaminase 1 (349 aa).

Residues 4–119 (RILVVDDSAV…KGFLEDSARR (116 aa)) enclose the Response regulatory domain. Aspartate 53 is subject to 4-aspartylphosphate. The CheB-type methylesterase domain maps to 159–349 (PRAGRAELVV…VASAVLAWAR (191 aa)). Residues serine 172, histidine 198, and aspartate 293 contribute to the active site.

This sequence belongs to the CheB family. In terms of processing, phosphorylated by CheA. Phosphorylation of the N-terminal regulatory domain activates the methylesterase activity.

The protein localises to the cytoplasm. It catalyses the reaction [protein]-L-glutamate 5-O-methyl ester + H2O = L-glutamyl-[protein] + methanol + H(+). It carries out the reaction L-glutaminyl-[protein] + H2O = L-glutamyl-[protein] + NH4(+). Functionally, involved in chemotaxis. Part of a chemotaxis signal transduction system that modulates chemotaxis in response to various stimuli. Catalyzes the demethylation of specific methylglutamate residues introduced into the chemoreceptors (methyl-accepting chemotaxis proteins or MCP) by CheR. Also mediates the irreversible deamidation of specific glutamine residues to glutamic acid. The protein is Protein-glutamate methylesterase/protein-glutamine glutaminase 1 of Anaeromyxobacter dehalogenans (strain 2CP-C).